Here is a 195-residue protein sequence, read N- to C-terminus: ATP-dependent Clp protease proteolytic subunit (195 aa).

The active-site Nucleophile is Ser-99. The active site involves His-124.

This sequence belongs to the peptidase S14 family. As to quaternary structure, fourteen ClpP subunits assemble into 2 heptameric rings which stack back to back to give a disk-like structure with a central cavity, resembling the structure of eukaryotic proteasomes.

It is found in the cytoplasm. The enzyme catalyses Hydrolysis of proteins to small peptides in the presence of ATP and magnesium. alpha-casein is the usual test substrate. In the absence of ATP, only oligopeptides shorter than five residues are hydrolyzed (such as succinyl-Leu-Tyr-|-NHMec, and Leu-Tyr-Leu-|-Tyr-Trp, in which cleavage of the -Tyr-|-Leu- and -Tyr-|-Trp bonds also occurs).. In terms of biological role, cleaves peptides in various proteins in a process that requires ATP hydrolysis. Has a chymotrypsin-like activity. Plays a major role in the degradation of misfolded proteins. The protein is ATP-dependent Clp protease proteolytic subunit of Desulforamulus reducens (strain ATCC BAA-1160 / DSM 100696 / MI-1) (Desulfotomaculum reducens).